We begin with the raw amino-acid sequence, 438 residues long: Enolase (438 aa).

Gln-174 serves as a coordination point for (2R)-2-phosphoglycerate. Glu-216 functions as the Proton donor in the catalytic mechanism. Positions 253, 297, and 324 each coordinate Mg(2+). (2R)-2-phosphoglycerate contacts are provided by Lys-349, Arg-378, Ser-379, and Lys-400. Catalysis depends on Lys-349, which acts as the Proton acceptor.

This sequence belongs to the enolase family. In terms of assembly, component of the RNA degradosome, a multiprotein complex involved in RNA processing and mRNA degradation. Mg(2+) is required as a cofactor.

It localises to the cytoplasm. Its subcellular location is the secreted. It is found in the cell surface. It catalyses the reaction (2R)-2-phosphoglycerate = phosphoenolpyruvate + H2O. The protein operates within carbohydrate degradation; glycolysis; pyruvate from D-glyceraldehyde 3-phosphate: step 4/5. Catalyzes the reversible conversion of 2-phosphoglycerate (2-PG) into phosphoenolpyruvate (PEP). It is essential for the degradation of carbohydrates via glycolysis. The polypeptide is Enolase (Psychrobacter cryohalolentis (strain ATCC BAA-1226 / DSM 17306 / VKM B-2378 / K5)).